Consider the following 324-residue polypeptide: Acetyl-coenzyme A carboxylase carboxyl transferase subunit alpha (324 aa).

One can recognise a CoA carboxyltransferase C-terminal domain in the interval Lys-37–Lys-291.

Belongs to the AccA family. Acetyl-CoA carboxylase is a heterohexamer composed of biotin carboxyl carrier protein (AccB), biotin carboxylase (AccC) and two subunits each of ACCase subunit alpha (AccA) and ACCase subunit beta (AccD).

The protein localises to the cytoplasm. It carries out the reaction N(6)-carboxybiotinyl-L-lysyl-[protein] + acetyl-CoA = N(6)-biotinyl-L-lysyl-[protein] + malonyl-CoA. The protein operates within lipid metabolism; malonyl-CoA biosynthesis; malonyl-CoA from acetyl-CoA: step 1/1. Its function is as follows. Component of the acetyl coenzyme A carboxylase (ACC) complex. First, biotin carboxylase catalyzes the carboxylation of biotin on its carrier protein (BCCP) and then the CO(2) group is transferred by the carboxyltransferase to acetyl-CoA to form malonyl-CoA. The chain is Acetyl-coenzyme A carboxylase carboxyl transferase subunit alpha from Chlamydia trachomatis serovar D (strain ATCC VR-885 / DSM 19411 / UW-3/Cx).